Here is a 120-residue protein sequence, read N- to C-terminus: DNA-binding protein HQ_1105A (120 aa).

The interval 1 to 55 (MSETPDDLDELRQQRMEELRDQADGQQSQTSDNTAAAQEAAREKAEAQQEALLKQ) is disordered. The segment covering 10-23 (ELRQQRMEELRDQA) has biased composition (basic and acidic residues). Polar residues predominate over residues 24–34 (DGQQSQTSDNT).

This sequence belongs to the PDCD5 family.

This chain is DNA-binding protein HQ_1105A, found in Haloquadratum walsbyi (strain DSM 16790 / HBSQ001).